The primary structure comprises 578 residues: MSHQFSSQSAFSSMSRRVYSTSSSAGSGGGSPAVGSVCYARGRCGGGGYGIHGRGFGSRSLYNLGGSRSISINLMGRSTSGFCQGGGVGGFGGGRGFGVGSTGAGGFGGGGFGGAGFGTSNFGLGGFGPYCPPGGIQEVTINQSLLEPLHLEVDPEIQRIKTQEREQIMVLNNKFASFIDKVRFLEQQNQVLQTKWELLQQVNTSTGTNNLEPLLENYIGDLRRQVDLLSAEQMRQNAEVRSMQDVVEDYKSKYEDEINKRTGSENDFVVLKKDVDAAYVSKVDLESRVDTLTGEVNFLKYLFLTELSQVQTHISDTNVILSMDNNRSLDLDSIIDAVRTQYELIAQRSKDEAEALYQTKYQELQITAGRHGDDLKNSKMEIAELNRTVQRLQAEISNVKKQIEQMQSLISDAEERGEQALQDAWQKLQDLEEALQQSKEELARLLRDYQAMLGVKLSLDVEIATYRQLLEGEESRMSGELQSHVSISVQNSQVSVNGGAGGGGSYGSGGYGGGSGGGYGGGRSYRGGGARGRSGGGYGSGCGGGGGSYGGSGRSGRGSSRVQIIQTSTNTSHRRILE.

The interval 1 to 163 is head; sequence MSHQFSSQSA…DPEIQRIKTQ (163 aa). Omega-N-methylarginine is present on arginine 95. The tract at residues 164–200 is coil 1A; sequence EREQIMVLNNKFASFIDKVRFLEQQNQVLQTKWELLQ. The IF rod domain occupies 164–477; the sequence is EREQIMVLNN…QLLEGEESRM (314 aa). The segment at 201 to 219 is linker 1; it reads QVNTSTGTNNLEPLLENYI. A coil 1B region spans residues 220 to 311; the sequence is GDLRRQVDLL…LFLTELSQVQ (92 aa). Positions 312–335 are linker 12; the sequence is THISDTNVILSMDNNRSLDLDSII. The coil 2 stretch occupies residues 336–474; sequence DAVRTQYELI…TYRQLLEGEE (139 aa). Residues 475 to 578 are tail; the sequence is SRMSGELQSH…TNTSHRRILE (104 aa). Omega-N-methylarginine is present on arginine 523. Residues 547–556 show a composition bias toward gly residues; that stretch reads GSYGGSGRSG. A disordered region spans residues 547 to 578; it reads GSYGGSGRSGRGSSRVQIIQTSTNTSHRRILE. The segment covering 562-571 has biased composition (polar residues); it reads VQIIQTSTNT.

Belongs to the intermediate filament family. In terms of processing, undergoes deimination of some arginine residues (citrullination). As to expression, expressed exclusively in skin.

This Homo sapiens (Human) protein is Keratin, type II cytoskeletal 1b (KRT77).